A 715-amino-acid chain; its full sequence is Protein psiH (715 aa).

Residues 1-20 (MNYLKPTIFLILCLVTFVYS) form the signal peptide. Residues 21–651 (QPSTLTIQGT…ICKTGAVVST (631 aa)) are Extracellular-facing. Positions 115–256 (NYDSKKQVYV…YDYCGVCSGD (142 aa)) constitute a PA14 domain. Residues Asn-149, Asn-377, Asn-528, and Asn-622 are each glycosylated (N-linked (GlcNAc...) asparagine). A helical membrane pass occupies residues 652–672 (AVIAGVTVAGAVALGVFIYGG). At 673-715 (KRGYDYWKESRNVQFSGSNSNPLYEQNPNGSGVNPLYNDNSAL) the chain is on the cytoplasmic side. The interval 690–715 (SNSNPLYEQNPNGSGVNPLYNDNSAL) is disordered.

Belongs to the prespore-cell-inducing factor family.

It is found in the membrane. This is Protein psiH (psiH) from Dictyostelium discoideum (Social amoeba).